The primary structure comprises 338 residues: Lipoate-protein ligase A (338 aa).

The BPL/LPL catalytic domain maps to 29 to 216 (SPDQRVLFLW…AFFNYYDEKV (188 aa)). Residues arginine 71, 76-79 (GAVF), and lysine 134 contribute to the ATP site. Lysine 134 provides a ligand contact to (R)-lipoate.

The protein belongs to the LplA family. As to quaternary structure, monomer.

It localises to the cytoplasm. It catalyses the reaction L-lysyl-[lipoyl-carrier protein] + (R)-lipoate + ATP = N(6)-[(R)-lipoyl]-L-lysyl-[lipoyl-carrier protein] + AMP + diphosphate + H(+). It functions in the pathway protein modification; protein lipoylation via exogenous pathway; protein N(6)-(lipoyl)lysine from lipoate: step 1/2. It participates in protein modification; protein lipoylation via exogenous pathway; protein N(6)-(lipoyl)lysine from lipoate: step 2/2. In terms of biological role, catalyzes both the ATP-dependent activation of exogenously supplied lipoate to lipoyl-AMP and the transfer of the activated lipoyl onto the lipoyl domains of lipoate-dependent enzymes. The protein is Lipoate-protein ligase A of Yersinia enterocolitica serotype O:8 / biotype 1B (strain NCTC 13174 / 8081).